Here is a 220-residue protein sequence, read N- to C-terminus: Octanoyltransferase (220 aa).

The 181-residue stretch at Gly31–Met211 folds into the BPL/LPL catalytic domain. Substrate-binding positions include Arg76 to His83, Ala143 to Gly145, and Gly156 to Ala158. Cys174 functions as the Acyl-thioester intermediate in the catalytic mechanism.

Belongs to the LipB family.

It is found in the cytoplasm. The enzyme catalyses octanoyl-[ACP] + L-lysyl-[protein] = N(6)-octanoyl-L-lysyl-[protein] + holo-[ACP] + H(+). The protein operates within protein modification; protein lipoylation via endogenous pathway; protein N(6)-(lipoyl)lysine from octanoyl-[acyl-carrier-protein]: step 1/2. Functionally, catalyzes the transfer of endogenously produced octanoic acid from octanoyl-acyl-carrier-protein onto the lipoyl domains of lipoate-dependent enzymes. Lipoyl-ACP can also act as a substrate although octanoyl-ACP is likely to be the physiological substrate. This chain is Octanoyltransferase, found in Solibacter usitatus (strain Ellin6076).